The primary structure comprises 327 residues: Delta(3,5)-Delta(2,4)-dienoyl-CoA isomerase, mitochondrial (327 aa).

Residues 1 to 33 (MATAMTVSSKLRGLLMQQLRGTSQLYFNISLRS) constitute a mitochondrion transit peptide. 115–119 (SGIDL) contacts substrate. N6-acetyllysine is present on K147. G173 lines the substrate pocket. N6-succinyllysine is present on K230. S267 bears the Phosphoserine mark. K316 is modified (N6-succinyllysine). A Microbody targeting signal motif is present at residues 325–327 (SKL). Residue K326 is modified to N6-acetyllysine.

The protein belongs to the enoyl-CoA hydratase/isomerase family. In terms of assembly, homohexamer.

It localises to the mitochondrion. Its subcellular location is the peroxisome. The catalysed reaction is (3E,5Z)-octadienoyl-CoA = (2E,4E)-octadienoyl-CoA. It catalyses the reaction (3E,5Z,8Z,11Z,14Z)-eicosapentaenoyl-CoA = (2E,4E,8Z,11Z,14Z)-eicosapentaenoyl-CoA. Its pathway is lipid metabolism; fatty acid beta-oxidation. Functionally, isomerization of 3-trans,5-cis-dienoyl-CoA to 2-trans,4-trans-dienoyl-CoA. The sequence is that of Delta(3,5)-Delta(2,4)-dienoyl-CoA isomerase, mitochondrial from Mus musculus (Mouse).